Here is a 186-residue protein sequence, read N- to C-terminus: uncharacterized protein (186 aa).

The protein belongs to the MG032/MG096/MG288 family.

This is an uncharacterized protein from Mycoplasma pneumoniae (strain ATCC 29342 / M129 / Subtype 1) (Mycoplasmoides pneumoniae).